The chain runs to 148 residues: Large ribosomal subunit protein bL9 (148 aa).

This sequence belongs to the bacterial ribosomal protein bL9 family.

Functionally, binds to the 23S rRNA. The chain is Large ribosomal subunit protein bL9 from Clostridium perfringens (strain ATCC 13124 / DSM 756 / JCM 1290 / NCIMB 6125 / NCTC 8237 / Type A).